A 357-amino-acid chain; its full sequence is UPF0283 membrane protein BCAN_A1047 (357 aa).

The disordered stretch occupies residues 1-36 (MSDKTPRKPTAFRLEQPARVSAASEQEEPRRPRAVK). Positions 27-36 (EEPRRPRAVK) are enriched in basic and acidic residues. The next 2 helical transmembrane spans lie at 78-98 (ILFGALGILVSFAIGIWTEDL) and 109-129 (LGWTALGVAMVALAAFAAIIL).

The protein belongs to the UPF0283 family.

Its subcellular location is the cell inner membrane. The chain is UPF0283 membrane protein BCAN_A1047 from Brucella canis (strain ATCC 23365 / NCTC 10854 / RM-666).